The primary structure comprises 170 residues: Small ribosomal subunit protein uS9 (170 aa).

This sequence belongs to the universal ribosomal protein uS9 family.

This Rhodococcus opacus (strain B4) protein is Small ribosomal subunit protein uS9.